Here is a 272-residue protein sequence, read N- to C-terminus: MTTLACRKLAPHPESPRHQHAGPWLVWLHGLLGSGQDWLPVAQLCGDYPSLLIDLPGHGQSVSLSADGFADISRQLSQTLQANGIREYWLAGYSLGGRIAIYHACYGRHHGLQGLLVEGGNLGLENAELRQARLQQDRQWAQRFRQEPLPQVLDDWYQQAVFADLDPQQREQLVLLRADNHGLAVAEMLEATSLGHQPWLLPALQRLNVPYTYLCGDRDHKFLQLAQQYRLPLHTLARAGHNAHRANPGAFAAQVLAFLSQSSCLPPSSLSR.

The protein belongs to the AB hydrolase superfamily. MenH family. Monomer.

The catalysed reaction is 5-enolpyruvoyl-6-hydroxy-2-succinyl-cyclohex-3-ene-1-carboxylate = (1R,6R)-6-hydroxy-2-succinyl-cyclohexa-2,4-diene-1-carboxylate + pyruvate. Its pathway is quinol/quinone metabolism; 1,4-dihydroxy-2-naphthoate biosynthesis; 1,4-dihydroxy-2-naphthoate from chorismate: step 3/7. The protein operates within quinol/quinone metabolism; menaquinone biosynthesis. In terms of biological role, catalyzes a proton abstraction reaction that results in 2,5-elimination of pyruvate from 2-succinyl-5-enolpyruvyl-6-hydroxy-3-cyclohexene-1-carboxylate (SEPHCHC) and the formation of 2-succinyl-6-hydroxy-2,4-cyclohexadiene-1-carboxylate (SHCHC). This is 2-succinyl-6-hydroxy-2,4-cyclohexadiene-1-carboxylate synthase from Yersinia pestis bv. Antiqua (strain Nepal516).